The chain runs to 360 residues: Protein Wnt-2 (360 aa).

Positions 1–25 (MNSPLRGIWLWLPLLLTWLTPEVSS) are cleaved as a signal peptide. Intrachain disulfides connect C76-C87, C127-C135, C137-C157, C206-C220, C208-C215, C278-C309, C294-C304, C308-C348, C324-C339, C326-C336, and C331-C332. S212 is lipidated: O-palmitoleoyl serine; by PORCN. The N-linked (GlcNAc...) asparagine glycan is linked to N295.

This sequence belongs to the Wnt family. In terms of processing, palmitoleoylation is required for efficient binding to frizzled receptors. Depalmitoleoylation leads to Wnt signaling pathway inhibition.

The protein localises to the secreted. It localises to the extracellular space. Its subcellular location is the extracellular matrix. Ligand for members of the frizzled family of seven transmembrane receptors. Probable developmental protein. May be a signaling molecule which affects the development of discrete regions of tissues. Is likely to signal over only few cell diameters. The sequence is that of Protein Wnt-2 (WNT2) from Ateles geoffroyi (Black-handed spider monkey).